The chain runs to 444 residues: tRNA-2-methylthio-N(6)-dimethylallyladenosine synthase (444 aa).

Residues 10–126 form the MTTase N-terminal domain; sequence SSFYIHTFGC…LAGLVAGLRE (117 aa). [4Fe-4S] cluster is bound by residues cysteine 19, cysteine 55, cysteine 89, cysteine 163, cysteine 167, and cysteine 170. Residues 149–379 enclose the Radical SAM core domain; that stretch reads RAGSISAFLP…IELQNAISRE (231 aa). Residues 382-444 enclose the TRAM domain; it reads QREIGKTVEV…TSATLSGEAV (63 aa).

This sequence belongs to the methylthiotransferase family. MiaB subfamily. Monomer. [4Fe-4S] cluster serves as cofactor.

It is found in the cytoplasm. It catalyses the reaction N(6)-dimethylallyladenosine(37) in tRNA + (sulfur carrier)-SH + AH2 + 2 S-adenosyl-L-methionine = 2-methylsulfanyl-N(6)-dimethylallyladenosine(37) in tRNA + (sulfur carrier)-H + 5'-deoxyadenosine + L-methionine + A + S-adenosyl-L-homocysteine + 2 H(+). In terms of biological role, catalyzes the methylthiolation of N6-(dimethylallyl)adenosine (i(6)A), leading to the formation of 2-methylthio-N6-(dimethylallyl)adenosine (ms(2)i(6)A) at position 37 in tRNAs that read codons beginning with uridine. This chain is tRNA-2-methylthio-N(6)-dimethylallyladenosine synthase, found in Chlorobaculum tepidum (strain ATCC 49652 / DSM 12025 / NBRC 103806 / TLS) (Chlorobium tepidum).